A 161-amino-acid polypeptide reads, in one-letter code: Cytochrome c-type biogenesis protein CcmE (161 aa).

Over 1–8 the chain is Cytoplasmic; the sequence is MNARRKKR. The chain crosses the membrane as a helical; Signal-anchor for type II membrane protein span at residues 9 to 29; that stretch reads LTLAVALIGGVAAIASLLLYA. Topologically, residues 30–161 are periplasmic; it reads LNSNLNLFYT…DYNEQQKTSY (132 aa). Residues histidine 131 and tyrosine 135 each contribute to the heme site.

This sequence belongs to the CcmE/CycJ family.

The protein resides in the cell inner membrane. In terms of biological role, heme chaperone required for the biogenesis of c-type cytochromes. Transiently binds heme delivered by CcmC and transfers the heme to apo-cytochromes in a process facilitated by CcmF and CcmH. In Shewanella sediminis (strain HAW-EB3), this protein is Cytochrome c-type biogenesis protein CcmE.